Here is a 551-residue protein sequence, read N- to C-terminus: Putative BTB/POZ domain-containing protein L76 (551 aa).

The BTB domain maps to 19 to 90 (TDIILEIEDD…FYGQENDVID (72 aa)).

Belongs to the mimivirus BTB/WD family.

The polypeptide is Putative BTB/POZ domain-containing protein L76 (Acanthamoeba polyphaga (Amoeba)).